Reading from the N-terminus, the 585-residue chain is Glutamate decarboxylase 2 (585 aa).

The disordered stretch occupies residues 1-25 (MASPGSGFWSFGSEDGSGDPENPST). 4 positions are modified to phosphoserine: Ser3, Ser6, Ser10, and Ser13. 2 S-palmitoyl cysteine lipidation sites follow: Cys30 and Cys45. 181–183 (QLS) provides a ligand contact to substrate. Lys396 carries the N6-(pyridoxal phosphate)lysine modification. Arg558 contributes to the substrate binding site.

Belongs to the group II decarboxylase family. As to quaternary structure, homodimer. The cofactor is pyridoxal 5'-phosphate. Phosphorylated; which does not affect kinetic parameters or subcellular location. Post-translationally, palmitoylated; which is required for presynaptic clustering.

Its subcellular location is the cytoplasm. It localises to the cytosol. The protein localises to the cytoplasmic vesicle. It is found in the presynaptic cell membrane. The protein resides in the golgi apparatus membrane. The enzyme catalyses L-glutamate + H(+) = 4-aminobutanoate + CO2. Functionally, catalyzes the production of GABA. This Canis lupus familiaris (Dog) protein is Glutamate decarboxylase 2 (GAD2).